Consider the following 1220-residue polypeptide: DNA-directed RNA polymerase subunit beta (1220 aa).

Belongs to the RNA polymerase beta chain family. The RNAP catalytic core consists of 2 alpha, 1 beta, 1 beta' and 1 omega subunit. When a sigma factor is associated with the core the holoenzyme is formed, which can initiate transcription.

It catalyses the reaction RNA(n) + a ribonucleoside 5'-triphosphate = RNA(n+1) + diphosphate. In terms of biological role, DNA-dependent RNA polymerase catalyzes the transcription of DNA into RNA using the four ribonucleoside triphosphates as substrates. The sequence is that of DNA-directed RNA polymerase subunit beta from Mesomycoplasma hyopneumoniae (strain J / ATCC 25934 / NCTC 10110) (Mycoplasma hyopneumoniae).